Reading from the N-terminus, the 284-residue chain is NH(3)-dependent NAD(+) synthetase (284 aa).

41–48 (GLSGGVDS) contributes to the ATP binding site. D47 lines the Mg(2+) pocket. A deamido-NAD(+)-binding site is contributed by R127. Residue T147 participates in ATP binding. E152 is a binding site for Mg(2+). Residue D167 participates in deamido-NAD(+) binding. ATP is bound by residues K176 and S199. The disordered stretch occupies residues 264–284 (FKRRPAPGLDLPEPEDPAMSG). The segment covering 275–284 (PEPEDPAMSG) has biased composition (acidic residues).

This sequence belongs to the NAD synthetase family. As to quaternary structure, homodimer.

The catalysed reaction is deamido-NAD(+) + NH4(+) + ATP = AMP + diphosphate + NAD(+) + H(+). It participates in cofactor biosynthesis; NAD(+) biosynthesis; NAD(+) from deamido-NAD(+) (ammonia route): step 1/1. In terms of biological role, catalyzes the ATP-dependent amidation of deamido-NAD to form NAD. Uses ammonia as a nitrogen source. The sequence is that of NH(3)-dependent NAD(+) synthetase from Methanopyrus kandleri (strain AV19 / DSM 6324 / JCM 9639 / NBRC 100938).